A 186-amino-acid chain; its full sequence is Ribosome-recycling factor (186 aa).

The protein belongs to the RRF family.

It localises to the cytoplasm. Functionally, responsible for the release of ribosomes from messenger RNA at the termination of protein biosynthesis. May increase the efficiency of translation by recycling ribosomes from one round of translation to another. The polypeptide is Ribosome-recycling factor (Rickettsia conorii (strain ATCC VR-613 / Malish 7)).